We begin with the raw amino-acid sequence, 337 residues long: Pentalenene synthase (337 aa).

2 residues coordinate Mg(2+): Asp-80 and Asp-84. Residues 80–84 carry the DDXXD motif motif; the sequence is DDLFD. Cys-128 and Cys-136 are joined by a disulfide. Residues Asn-219, Ser-223, and Glu-227 each coordinate Mg(2+).

Belongs to the terpene synthase family. As to quaternary structure, monomer. The cofactor is Mg(2+).

It carries out the reaction (2E,6E)-farnesyl diphosphate = pentalenene + diphosphate. Its pathway is sesquiterpene biosynthesis; pentalenene biosynthesis; pentalenene from farnesyl diphosphate: step 1/1. It participates in antibiotic biosynthesis; pentalenolactone biosynthesis. In terms of biological role, catalyzes the cyclization of farnesyl diphosphate (FPP) to the tricyclic sesquiterpene pentalenene, which is the hydrocarbon precursor of the pentalenolactone family of antibiotics produced by a variety of Streptomyces species. The protein is Pentalenene synthase (penA) of Streptomyces exfoliatus (Streptomyces hydrogenans).